Reading from the N-terminus, the 88-residue chain is Small ribosomal subunit protein uS17 (88 aa).

The protein belongs to the universal ribosomal protein uS17 family. In terms of assembly, part of the 30S ribosomal subunit.

Functionally, one of the primary rRNA binding proteins, it binds specifically to the 5'-end of 16S ribosomal RNA. This is Small ribosomal subunit protein uS17 from Prochlorococcus marinus (strain MIT 9515).